The primary structure comprises 203 residues: Holliday junction branch migration complex subunit RuvA (203 aa).

A domain I region spans residues 1–64 (MIGRLNGILV…EDAQLLYGFI (64 aa)). Residues 65–143 (TKQERALFRL…SLLEASVGNE (79 aa)) are domain II. The interval 144–154 (REFMLQTNYTA) is flexible linker. Residues 155–203 (PAANAEEDAISALVSLGYKPPQASRAVSKAYKEGMDTETLIKLALKSML) are domain III.

The protein belongs to the RuvA family. In terms of assembly, homotetramer. Forms an RuvA(8)-RuvB(12)-Holliday junction (HJ) complex. HJ DNA is sandwiched between 2 RuvA tetramers; dsDNA enters through RuvA and exits via RuvB. An RuvB hexamer assembles on each DNA strand where it exits the tetramer. Each RuvB hexamer is contacted by two RuvA subunits (via domain III) on 2 adjacent RuvB subunits; this complex drives branch migration. In the full resolvosome a probable DNA-RuvA(4)-RuvB(12)-RuvC(2) complex forms which resolves the HJ.

It is found in the cytoplasm. Its function is as follows. The RuvA-RuvB-RuvC complex processes Holliday junction (HJ) DNA during genetic recombination and DNA repair, while the RuvA-RuvB complex plays an important role in the rescue of blocked DNA replication forks via replication fork reversal (RFR). RuvA specifically binds to HJ cruciform DNA, conferring on it an open structure. The RuvB hexamer acts as an ATP-dependent pump, pulling dsDNA into and through the RuvAB complex. HJ branch migration allows RuvC to scan DNA until it finds its consensus sequence, where it cleaves and resolves the cruciform DNA. In Shewanella denitrificans (strain OS217 / ATCC BAA-1090 / DSM 15013), this protein is Holliday junction branch migration complex subunit RuvA.